The following is a 503-amino-acid chain: Probable cytosol aminopeptidase (503 aa).

Residues Lys-274 and Asp-279 each coordinate Mn(2+). Lys-286 is an active-site residue. Mn(2+)-binding residues include Asp-297, Asp-356, and Glu-358. The active site involves Arg-360.

It belongs to the peptidase M17 family. It depends on Mn(2+) as a cofactor.

It is found in the cytoplasm. The enzyme catalyses Release of an N-terminal amino acid, Xaa-|-Yaa-, in which Xaa is preferably Leu, but may be other amino acids including Pro although not Arg or Lys, and Yaa may be Pro. Amino acid amides and methyl esters are also readily hydrolyzed, but rates on arylamides are exceedingly low.. It carries out the reaction Release of an N-terminal amino acid, preferentially leucine, but not glutamic or aspartic acids.. Functionally, presumably involved in the processing and regular turnover of intracellular proteins. Catalyzes the removal of unsubstituted N-terminal amino acids from various peptides. In Burkholderia multivorans (strain ATCC 17616 / 249), this protein is Probable cytosol aminopeptidase.